A 141-amino-acid polypeptide reads, in one-letter code: ATP synthase epsilon chain (141 aa).

Belongs to the ATPase epsilon chain family. As to quaternary structure, F-type ATPases have 2 components, CF(1) - the catalytic core - and CF(0) - the membrane proton channel. CF(1) has five subunits: alpha(3), beta(3), gamma(1), delta(1), epsilon(1). CF(0) has three main subunits: a, b and c.

Its subcellular location is the cell inner membrane. Produces ATP from ADP in the presence of a proton gradient across the membrane. The sequence is that of ATP synthase epsilon chain from Pseudomonas savastanoi pv. phaseolicola (strain 1448A / Race 6) (Pseudomonas syringae pv. phaseolicola (strain 1448A / Race 6)).